The following is an 81-amino-acid chain: Acyl carrier protein (81 aa).

The 76-residue stretch at 2–77 folds into the Carrier domain; it reads ASIEERVVDI…EAIDFIEKEK (76 aa). S37 carries the O-(pantetheine 4'-phosphoryl)serine modification.

The protein belongs to the acyl carrier protein (ACP) family. Post-translationally, 4'-phosphopantetheine is transferred from CoA to a specific serine of apo-ACP by AcpS. This modification is essential for activity because fatty acids are bound in thioester linkage to the sulfhydryl of the prosthetic group.

It is found in the cytoplasm. It participates in lipid metabolism; fatty acid biosynthesis. Carrier of the growing fatty acid chain in fatty acid biosynthesis. This Rhodopirellula baltica (strain DSM 10527 / NCIMB 13988 / SH1) protein is Acyl carrier protein.